We begin with the raw amino-acid sequence, 196 residues long: DnaA initiator-associating protein DiaA (196 aa).

The 163-residue stretch at 34–196 (LVHSLLNGNK…DNTLFPHQDD (163 aa)) folds into the SIS domain.

The protein belongs to the SIS family. DiaA subfamily. As to quaternary structure, homotetramer; dimer of dimers.

Functionally, required for the timely initiation of chromosomal replication via direct interactions with the DnaA initiator protein. This chain is DnaA initiator-associating protein DiaA, found in Salmonella enteritidis PT4 (strain P125109).